The sequence spans 194 residues: Potassium-transporting ATPase KdpC subunit (194 aa).

The chain crosses the membrane as a helical span at residues Leu12–Phe34.

It belongs to the KdpC family. As to quaternary structure, the system is composed of three essential subunits: KdpA, KdpB and KdpC.

It is found in the cell inner membrane. Part of the high-affinity ATP-driven potassium transport (or Kdp) system, which catalyzes the hydrolysis of ATP coupled with the electrogenic transport of potassium into the cytoplasm. This subunit acts as a catalytic chaperone that increases the ATP-binding affinity of the ATP-hydrolyzing subunit KdpB by the formation of a transient KdpB/KdpC/ATP ternary complex. This chain is Potassium-transporting ATPase KdpC subunit, found in Salmonella heidelberg (strain SL476).